Consider the following 200-residue polypeptide: Recombination protein RecR (200 aa).

The C4-type zinc finger occupies 60 to 75; that stretch reads CVYCQALTEDDVCNIC. The Toprim domain occupies 83 to 177; the sequence is TKLCIIESML…KISRIGFGVP (95 aa).

Belongs to the RecR family.

In terms of biological role, may play a role in DNA repair. It seems to be involved in an RecBC-independent recombinational process of DNA repair. It may act with RecF and RecO. The sequence is that of Recombination protein RecR from Francisella tularensis subsp. tularensis (strain SCHU S4 / Schu 4).